The primary structure comprises 327 residues: Tagatose 1,6-diphosphate aldolase 2 (327 aa).

This sequence belongs to the aldolase LacD family.

The catalysed reaction is D-tagatofuranose 1,6-bisphosphate = D-glyceraldehyde 3-phosphate + dihydroxyacetone phosphate. The protein operates within carbohydrate metabolism; D-tagatose 6-phosphate degradation; D-glyceraldehyde 3-phosphate and glycerone phosphate from D-tagatose 6-phosphate: step 2/2. In Streptococcus pyogenes serotype M6 (strain ATCC BAA-946 / MGAS10394), this protein is Tagatose 1,6-diphosphate aldolase 2.